The chain runs to 334 residues: Broad-range acid phosphatase DET1 (334 aa).

His32 serves as the catalytic Tele-phosphohistidine intermediate. Substrate is bound by residues Asn38, Asn44–Gly45, and Arg108. Glu126 acts as the Proton donor/acceptor in catalysis. Residues Leu168–Thr171 and Arg195–Gln205 each bind substrate. Ser248 bears the Phosphoserine mark.

It belongs to the phosphoglycerate mutase family.

The protein localises to the cytoplasm. Its subcellular location is the nucleus. In terms of biological role, metal-independent, broad-range acid phosphatase. Involved, either directly or indirectly, in the bidirectional transport of sterols between the endoplasmic reticulum and the plasma membrane. This chain is Broad-range acid phosphatase DET1 (DET1), found in Saccharomyces cerevisiae (strain ATCC 204508 / S288c) (Baker's yeast).